The sequence spans 426 residues: uncharacterized protein (426 aa).

Solcar repeat units follow at residues Lys-125–Val-216, His-226–Thr-315, and Pro-334–Trp-422. Helical transmembrane passes span Tyr-130–Leu-151, Gly-193–Met-213, Leu-229–Val-249, Gly-290–Glu-310, Gly-336–Leu-356, and Leu-394–Val-415.

It belongs to the mitochondrial carrier (TC 2.A.29) family.

The protein localises to the mitochondrion inner membrane. This is an uncharacterized protein from Schizosaccharomyces pombe (strain 972 / ATCC 24843) (Fission yeast).